The following is a 182-amino-acid chain: Large ribosomal subunit protein uL5 (182 aa).

It belongs to the universal ribosomal protein uL5 family. Part of the 50S ribosomal subunit; part of the 5S rRNA/L5/L18/L25 subcomplex. Contacts the 5S rRNA and the P site tRNA. Forms a bridge to the 30S subunit in the 70S ribosome.

In terms of biological role, this is one of the proteins that bind and probably mediate the attachment of the 5S RNA into the large ribosomal subunit, where it forms part of the central protuberance. In the 70S ribosome it contacts protein S13 of the 30S subunit (bridge B1b), connecting the 2 subunits; this bridge is implicated in subunit movement. Contacts the P site tRNA; the 5S rRNA and some of its associated proteins might help stabilize positioning of ribosome-bound tRNAs. The sequence is that of Large ribosomal subunit protein uL5 from Borrelia duttonii (strain Ly).